We begin with the raw amino-acid sequence, 377 residues long: Chaperone protein DnaJ (377 aa).

In terms of domain architecture, J spans 5 to 70 (DYYEILGVSK…QKRAAYDQYG (66 aa)). A CR-type zinc finger spans residues 132 to 210 (GVTKEIRIPT…CHGHGRVEKT (79 aa)). Zn(2+) contacts are provided by Cys-145, Cys-148, Cys-162, Cys-165, Cys-184, Cys-187, Cys-198, and Cys-201. 4 CXXCXGXG motif repeats span residues 145–152 (CDVCHGSG), 162–169 (CPTCHGAG), 184–191 (CPHCQGRG), and 198–205 (CNKCHGHG).

This sequence belongs to the DnaJ family. Homodimer. Zn(2+) is required as a cofactor.

Its subcellular location is the cytoplasm. Participates actively in the response to hyperosmotic and heat shock by preventing the aggregation of stress-denatured proteins and by disaggregating proteins, also in an autonomous, DnaK-independent fashion. Unfolded proteins bind initially to DnaJ; upon interaction with the DnaJ-bound protein, DnaK hydrolyzes its bound ATP, resulting in the formation of a stable complex. GrpE releases ADP from DnaK; ATP binding to DnaK triggers the release of the substrate protein, thus completing the reaction cycle. Several rounds of ATP-dependent interactions between DnaJ, DnaK and GrpE are required for fully efficient folding. Also involved, together with DnaK and GrpE, in the DNA replication of plasmids through activation of initiation proteins. This is Chaperone protein DnaJ from Klebsiella pneumoniae subsp. pneumoniae (strain ATCC 700721 / MGH 78578).